The sequence spans 86 residues: Defensin-like SRCA-homolog protein (86 aa).

Residues 1-26 (MRCVVLFMVSCLLIVLLINHFEEVEA) form the signal peptide. 4 cysteine pairs are disulfide-bonded: cysteine 32–cysteine 84, cysteine 42–cysteine 70, cysteine 52–cysteine 79, and cysteine 68–cysteine 81.

The protein belongs to the DEFL family.

It is found in the secreted. Its function is as follows. Involved in male-mediated self-incompatibility. The polypeptide is Defensin-like SRCA-homolog protein (SCR37) (Arabidopsis lyrata (Lyre-leaved rock-cress)).